We begin with the raw amino-acid sequence, 190 residues long: Putative resolvase R771 (190 aa).

The segment at residues 11–30 is a DNA-binding region (H-T-H motif); that stretch reads SSVLGVHQRTLYQWDKKGWI. The Resolvase/invertase-type recombinase catalytic domain maps to 61-190; the sequence is LSICYVRVSS…RNGLKKYSNK (130 aa). The stretch at 66–92 forms a coiled coil; that stretch reads VRVSSNNQKDDLERQIKFMKKKYPNHT. The active-site O-(5'-phospho-DNA)-serine intermediate is the serine 69.

This sequence belongs to the site-specific recombinase resolvase family.

Functionally, resolvase catalyzes the resolution (a site-specific recombination) of the cointegrated replicon to yield the final transposition products. The sequence is that of Putative resolvase R771 from Acanthamoeba polyphaga (Amoeba).